Here is an 808-residue protein sequence, read N- to C-terminus: Envelope glycoprotein H (808 aa).

Positions Met1–Ser17 are cleaved as a signal peptide. Over Ser18–Ala761 the chain is Virion surface. 9 N-linked (GlcNAc...) asparagine; by host glycosylation sites follow: Asn44, Asn60, Asn114, Asn240, Asn272, Asn431, Asn461, Asn719, and Asn742. The segment at Ala205–Leu266 is interaction with gL. The helical transmembrane segment at Thr762 to Val782 threads the bilayer. The Intravirion portion of the chain corresponds to Arg783–Asn808.

It belongs to the herpesviridae glycoprotein H family. In terms of assembly, interacts with glycoprotein L (gL); this interaction is necessary for the correct processing and cell surface expression of gH. The heterodimer gH/gL seems to interact with gB trimers during fusion. Post-translationally, N-glycosylated, O-glycosylated, and sialylated.

The protein resides in the virion membrane. Its subcellular location is the host cell membrane. It is found in the host endosome membrane. The heterodimer glycoprotein H-glycoprotein L is required for the fusion of viral and plasma membranes leading to virus entry into the host cell. Following initial binding to host receptor, membrane fusion is mediated by the fusion machinery composed of gB and the heterodimer gH/gL. May also be involved in the fusion between the virion envelope and the outer nuclear membrane during virion morphogenesis. The chain is Envelope glycoprotein H from Gallus gallus (Chicken).